Reading from the N-terminus, the 312-residue chain is MLQYQIDRVDYQIADDQSQSGVFVIGPLDRGQATTLGTALRRVLMSGLEGTAVTAVRIAGVNHEYATVPGVREDVLDILLNCKELVLSSRSRDTEIGRLVVNGPASVTAGDLQFSSQVSVVNADCPIATVADGHALELEVHVERGVGYRPVERTSEDAAALDLLQIDAVFMPVRRVNFTVDETAVGEGGSARERLRLEINTNGSITPDDALAYAANQLIALFQPLATVTLAEEPGQEPEPSAESQIPLEELNLSVRAYNCLKRAQVNSVSDLMGFSYEDLLEIKNFGAKSADEVIEALERIGISLPQSRTTA.

The tract at residues 1-229 (MLQYQIDRVD…ALFQPLATVT (229 aa)) is alpha N-terminal domain (alpha-NTD). The alpha C-terminal domain (alpha-CTD) stretch occupies residues 241-312 (SAESQIPLEE…ISLPQSRTTA (72 aa)).

It belongs to the RNA polymerase alpha chain family. As to quaternary structure, in cyanobacteria the RNAP catalytic core is composed of 2 alpha, 1 beta, 1 beta', 1 gamma and 1 omega subunit. When a sigma factor is associated with the core the holoenzyme is formed, which can initiate transcription.

It catalyses the reaction RNA(n) + a ribonucleoside 5'-triphosphate = RNA(n+1) + diphosphate. DNA-dependent RNA polymerase catalyzes the transcription of DNA into RNA using the four ribonucleoside triphosphates as substrates. The chain is DNA-directed RNA polymerase subunit alpha from Synechococcus sp. (strain RCC307).